The sequence spans 238 residues: Phosphoribosylaminoimidazole-succinocarboxamide synthase (238 aa).

This sequence belongs to the SAICAR synthetase family.

It carries out the reaction 5-amino-1-(5-phospho-D-ribosyl)imidazole-4-carboxylate + L-aspartate + ATP = (2S)-2-[5-amino-1-(5-phospho-beta-D-ribosyl)imidazole-4-carboxamido]succinate + ADP + phosphate + 2 H(+). Its pathway is purine metabolism; IMP biosynthesis via de novo pathway; 5-amino-1-(5-phospho-D-ribosyl)imidazole-4-carboxamide from 5-amino-1-(5-phospho-D-ribosyl)imidazole-4-carboxylate: step 1/2. This chain is Phosphoribosylaminoimidazole-succinocarboxamide synthase, found in Methanococcoides burtonii (strain DSM 6242 / NBRC 107633 / OCM 468 / ACE-M).